Consider the following 470-residue polypeptide: ATP synthase subunit beta (470 aa).

ATP is bound at residue 155–162 (GGAGVGKT).

It belongs to the ATPase alpha/beta chains family. F-type ATPases have 2 components, CF(1) - the catalytic core - and CF(0) - the membrane proton channel. CF(1) has five subunits: alpha(3), beta(3), gamma(1), delta(1), epsilon(1). CF(0) has three main subunits: a(1), b(2) and c(9-12). The alpha and beta chains form an alternating ring which encloses part of the gamma chain. CF(1) is attached to CF(0) by a central stalk formed by the gamma and epsilon chains, while a peripheral stalk is formed by the delta and b chains.

The protein localises to the cell inner membrane. The catalysed reaction is ATP + H2O + 4 H(+)(in) = ADP + phosphate + 5 H(+)(out). In terms of biological role, produces ATP from ADP in the presence of a proton gradient across the membrane. The catalytic sites are hosted primarily by the beta subunits. This is ATP synthase subunit beta from Oleidesulfovibrio alaskensis (strain ATCC BAA-1058 / DSM 17464 / G20) (Desulfovibrio alaskensis).